A 338-amino-acid chain; its full sequence is Ketol-acid reductoisomerase (NADP(+)) (338 aa).

One can recognise a KARI N-terminal Rossmann domain in the interval 1 to 181 (MKIYYDKDCN…GGGKAGIIET (181 aa)). Residues 24-27 (YGSQ), Lys47, Ser50, Ser52, and 82-85 (DEIQ) contribute to the NADP(+) site. His107 is an active-site residue. Residue Gly133 participates in NADP(+) binding. In terms of domain architecture, KARI C-terminal knotted spans 182 to 327 (SFKEETETDL…ARLRSMMAWI (146 aa)). Positions 190, 194, 226, and 230 each coordinate Mg(2+). Position 251 (Ser251) interacts with substrate.

The protein belongs to the ketol-acid reductoisomerase family. Requires Mg(2+) as cofactor.

It carries out the reaction (2R)-2,3-dihydroxy-3-methylbutanoate + NADP(+) = (2S)-2-acetolactate + NADPH + H(+). The enzyme catalyses (2R,3R)-2,3-dihydroxy-3-methylpentanoate + NADP(+) = (S)-2-ethyl-2-hydroxy-3-oxobutanoate + NADPH + H(+). It functions in the pathway amino-acid biosynthesis; L-isoleucine biosynthesis; L-isoleucine from 2-oxobutanoate: step 2/4. The protein operates within amino-acid biosynthesis; L-valine biosynthesis; L-valine from pyruvate: step 2/4. Involved in the biosynthesis of branched-chain amino acids (BCAA). Catalyzes an alkyl-migration followed by a ketol-acid reduction of (S)-2-acetolactate (S2AL) to yield (R)-2,3-dihydroxy-isovalerate. In the isomerase reaction, S2AL is rearranged via a Mg-dependent methyl migration to produce 3-hydroxy-3-methyl-2-ketobutyrate (HMKB). In the reductase reaction, this 2-ketoacid undergoes a metal-dependent reduction by NADPH to yield (R)-2,3-dihydroxy-isovalerate. This chain is Ketol-acid reductoisomerase (NADP(+)), found in Geotalea uraniireducens (strain Rf4) (Geobacter uraniireducens).